The following is a 210-amino-acid chain: SAP domain-containing ribonucleoprotein (210 aa).

An N-acetylalanine modification is found at Ala-2. The region spanning 8 to 42 (LHKLKLAELKQECLARGLETKGIKQDLINRLQAYL) is the SAP domain. An N6-acetyllysine modification is found at Lys-10. Positions 45 to 64 (HAEEEANEEDVLGDETEEEE) are enriched in acidic residues. A disordered region spans residues 45–87 (HAEEEANEEDVLGDETEEEEPKPIELPVKEEEPPEKAVDMASE). Residues 65-87 (PKPIELPVKEEEPPEKAVDMASE) show a composition bias toward basic and acidic residues. Lys-142 carries the post-translational modification N6-acetyllysine. Residues 162–210 (SSISRKSEDDEKLKKRKERFGIVTSSAGTGTTEDTEAKKRKRAERFGIA) are disordered. Ser-163 carries the phosphoserine modification. A compositionally biased stretch (polar residues) spans 184-193 (VTSSAGTGTT).

This sequence belongs to the SAP domain-containing ribonucleoprotein family. Interacts with DDX39A. Interacts with FUS. Interacts (via the C-terminal domain) with DDX39B; the interaction is direct and facilitates RNA binding of DDX39B. Component of the transcription/export (TREX) complex at least composed of ALYREF/THOC4, DDX39B, SARNP/CIP29, CHTOP and the THO subcomplex; TREX seems to have dynamic structure involving ATP-dependent remodeling; in the complex interacts directly with DDX39B in a ATP-dependent manner which bridges it to ALYREF/THOC4.

The protein resides in the nucleus. It is found in the nucleus speckle. Its function is as follows. Binds both single-stranded and double-stranded DNA with higher affinity for the single-stranded form. Specifically binds to scaffold/matrix attachment region DNA. Also binds single-stranded RNA. Enhances RNA unwinding activity of DDX39A. May participate in important transcriptional or translational control of cell growth, metabolism and carcinogenesis. Component of the TREX complex which is thought to couple mRNA transcription, processing and nuclear export, and specifically associates with spliced mRNA and not with unspliced pre-mRNA. The TREX complex is recruited to spliced mRNAs by a transcription-independent mechanism, binds to mRNA upstream of the exon-junction complex (EJC) and is recruited in a splicing- and cap-dependent manner to a region near the 5' end of the mRNA where it functions in mRNA export to the cytoplasm via the TAP/NXF1 pathway. Associates with DDX39B, which facilitates RNA binding of DDX39B and likely plays a role in mRNA export. This is SAP domain-containing ribonucleoprotein (Sarnp) from Mus musculus (Mouse).